The following is a 146-amino-acid chain: MTLRLNELAPAEGAKRDNRRLGRGIGSGVGKTGGRGVKGQKSRKSGGVRPGFEGGQTAIYRRLPKFGFTSQIALKTAEVRLSELNKVEGEIVSLETLKAANVVRRDQVRARVVLSGEVTRAFTVQGVALTKGAQAAIEAAGGKVEE.

Positions 1–54 (MTLRLNELAPAEGAKRDNRRLGRGIGSGVGKTGGRGVKGQKSRKSGGVRPGFEG) are disordered. A compositionally biased stretch (gly residues) spans 23-37 (RGIGSGVGKTGGRGV).

The protein belongs to the universal ribosomal protein uL15 family. Part of the 50S ribosomal subunit.

Its function is as follows. Binds to the 23S rRNA. This Acinetobacter baylyi (strain ATCC 33305 / BD413 / ADP1) protein is Large ribosomal subunit protein uL15.